A 334-amino-acid chain; its full sequence is Fructose-1,6-bisphosphatase class 1 (334 aa).

Glu-92, Asp-114, Leu-116, and Asp-117 together coordinate Mg(2+). Substrate contacts are provided by residues 117 to 120 and Asn-209; that span reads DGSS. Residue Glu-281 coordinates Mg(2+).

It belongs to the FBPase class 1 family. In terms of assembly, homotetramer. Mg(2+) serves as cofactor.

It localises to the cytoplasm. It catalyses the reaction beta-D-fructose 1,6-bisphosphate + H2O = beta-D-fructose 6-phosphate + phosphate. It functions in the pathway carbohydrate biosynthesis; gluconeogenesis. This is Fructose-1,6-bisphosphatase class 1 from Nitrosomonas eutropha (strain DSM 101675 / C91 / Nm57).